A 94-amino-acid chain; its full sequence is Small ribosomal subunit protein uS19 (94 aa).

A disordered region spans residues 73-94 (EFSPTRRFGGHADKKSKKGQVK).

Belongs to the universal ribosomal protein uS19 family.

Protein S19 forms a complex with S13 that binds strongly to the 16S ribosomal RNA. This chain is Small ribosomal subunit protein uS19, found in Kosmotoga olearia (strain ATCC BAA-1733 / DSM 21960 / TBF 19.5.1).